A 257-amino-acid chain; its full sequence is Tryptophan synthase alpha chain (257 aa).

Catalysis depends on proton acceptor residues Glu-47 and Asp-58.

The protein belongs to the TrpA family. As to quaternary structure, tetramer of two alpha and two beta chains.

It catalyses the reaction (1S,2R)-1-C-(indol-3-yl)glycerol 3-phosphate + L-serine = D-glyceraldehyde 3-phosphate + L-tryptophan + H2O. Its pathway is amino-acid biosynthesis; L-tryptophan biosynthesis; L-tryptophan from chorismate: step 5/5. The alpha subunit is responsible for the aldol cleavage of indoleglycerol phosphate to indole and glyceraldehyde 3-phosphate. The polypeptide is Tryptophan synthase alpha chain (Listeria innocua serovar 6a (strain ATCC BAA-680 / CLIP 11262)).